The chain runs to 192 residues: Inosine triphosphate pyrophosphatase (192 aa).

11–16 (TGNKNK) provides a ligand contact to ITP. Glu-41 contacts Mg(2+). Residues Lys-53, 69–70 (DT), Lys-86, 146–149 (FGWD), Lys-169, and 174–175 (HR) contribute to the ITP site.

It belongs to the HAM1 NTPase family. Homodimer. It depends on Mg(2+) as a cofactor. Mn(2+) is required as a cofactor.

The protein localises to the cytoplasm. The enzyme catalyses ITP + H2O = IMP + diphosphate + H(+). The catalysed reaction is dITP + H2O = dIMP + diphosphate + H(+). It catalyses the reaction XTP + H2O = XMP + diphosphate + H(+). Functionally, pyrophosphatase that hydrolyzes non-canonical purine nucleotides such as inosine triphosphate (ITP), deoxyinosine triphosphate (dITP) or xanthosine 5'-triphosphate (XTP) to their respective monophosphate derivatives. The enzyme does not distinguish between the deoxy- and ribose forms. Probably excludes non-canonical purines from RNA and DNA precursor pools, thus preventing their incorporation into RNA and DNA and avoiding chromosomal lesions. The protein is Inosine triphosphate pyrophosphatase of Ciona intestinalis (Transparent sea squirt).